The sequence spans 331 residues: GTP-binding protein RHO5 (331 aa).

Residue 10-17 coordinates GTP; sequence GDGAVGKT. Residues 51–76 are disordered; sequence ASSPLELDNGNDKRGSLSSASSSPST. The segment covering 66–75 has biased composition (low complexity); it reads SLSSASSSPS. Residues 87-91 and 156-159 contribute to the GTP site; these read DTAGQ and TKSD. A phosphoserine mark is found at serine 223 and serine 228. A phosphothreonine mark is found at threonine 232 and threonine 244. Residues 239–331 are disordered; sequence TATTNTNGDK…KKKKSKCVIL (93 aa). Residues 258–273 are compositionally biased toward polar residues; sequence HHNNSTDSTLPKGSLQ. Residue lysine 276 forms a Glycyl lysine isopeptide (Lys-Gly) (interchain with G-Cter in ubiquitin) linkage. Positions 287-297 are enriched in basic and acidic residues; that stretch reads GQKDKIHEQSK. The span at 308–331 shows a compositional bias: basic residues; sequence HHNKQAKPKTRNDKKKKKSKCVIL. Residue cysteine 328 is modified to Cysteine methyl ester. The S-geranylgeranyl cysteine moiety is linked to residue cysteine 328. Residues 329-331 constitute a propeptide, removed in mature form; sequence VIL.

Belongs to the small GTPase superfamily. Rho family. As to quaternary structure, interacts with RGD2.

It is found in the membrane. The protein resides in the mitochondrion. In terms of biological role, small GTPase that negatively regulates a MAP kinase branch, downstream of SLT2, of the PKC1-mediated signal transduction pathway. With its specific guanine nucleotide exchange factor (GEF), the heterodimeric complex DCK1/LMO1, relocates to mitochondria upon oxidative stress and triggers cell death. The DCK1/LMO1/RHO5 signaling module that mediates mitochondrial turnover under nitrogen starvation conditions via mitophagy. The DCK1/LMO1/RHO5 signaling module also plays a role in cell wall integrity signaling. The chain is GTP-binding protein RHO5 from Saccharomyces cerevisiae (strain ATCC 204508 / S288c) (Baker's yeast).